A 135-amino-acid chain; its full sequence is uncharacterized protein (135 aa).

Positions 1–36 (MSHAEKPMSDSVNHHHHRTFEVLTAEPVRSRRKPRH) are disordered.

It belongs to the transposase 8 family.

This is an uncharacterized protein from Sinorhizobium fredii (strain NBRC 101917 / NGR234).